Reading from the N-terminus, the 448-residue chain is Trigger factor (448 aa).

Residues 172 to 257 (GDRVTVDFVG…MKKIEWPHLP (86 aa)) form the PPIase FKBP-type domain.

This sequence belongs to the FKBP-type PPIase family. Tig subfamily.

It is found in the cytoplasm. It catalyses the reaction [protein]-peptidylproline (omega=180) = [protein]-peptidylproline (omega=0). Its function is as follows. Involved in protein export. Acts as a chaperone by maintaining the newly synthesized protein in an open conformation. Functions as a peptidyl-prolyl cis-trans isomerase. This Burkholderia lata (strain ATCC 17760 / DSM 23089 / LMG 22485 / NCIMB 9086 / R18194 / 383) protein is Trigger factor.